A 348-amino-acid polypeptide reads, in one-letter code: Anthranilate phosphoribosyltransferase (348 aa).

5-phospho-alpha-D-ribose 1-diphosphate is bound by residues G81, 84 to 85 (GD), 91 to 94 (NVST), 109 to 117 (KHGNRAVSG), and S121. Position 81 (G81) interacts with anthranilate. Mg(2+) is bound at residue S93. N112 lines the anthranilate pocket. R167 contacts anthranilate. Residues D226 and E227 each coordinate Mg(2+).

It belongs to the anthranilate phosphoribosyltransferase family. As to quaternary structure, homodimer. It depends on Mg(2+) as a cofactor.

The enzyme catalyses N-(5-phospho-beta-D-ribosyl)anthranilate + diphosphate = 5-phospho-alpha-D-ribose 1-diphosphate + anthranilate. It functions in the pathway amino-acid biosynthesis; L-tryptophan biosynthesis; L-tryptophan from chorismate: step 2/5. Functionally, catalyzes the transfer of the phosphoribosyl group of 5-phosphorylribose-1-pyrophosphate (PRPP) to anthranilate to yield N-(5'-phosphoribosyl)-anthranilate (PRA). This is Anthranilate phosphoribosyltransferase from Azotobacter vinelandii (strain DJ / ATCC BAA-1303).